Here is a 404-residue protein sequence, read N- to C-terminus: Methionine aminopeptidase 1D, mitochondrial (404 aa).

The transit peptide at 1–58 (MNKILKNIINKSSINNVFKTSFNGGISSSSSSSSSYLNNNNNIIKSYNVQQKQQQRYY) directs the protein to the mitochondrion. A disordered region spans residues 86 to 109 (VRSQRLTKKTASPLEGMNRKERRK). H232 lines the substrate pocket. A divalent metal cation contacts are provided by D249, D260, and H323. H330 lines the substrate pocket. Residues E355 and E389 each contribute to the a divalent metal cation site.

Belongs to the peptidase M24A family. Methionine aminopeptidase type 1 subfamily. Co(2+) is required as a cofactor. The cofactor is Zn(2+). Requires Mn(2+) as cofactor. It depends on Fe(2+) as a cofactor.

It localises to the mitochondrion. The catalysed reaction is Release of N-terminal amino acids, preferentially methionine, from peptides and arylamides.. Functionally, removes the N-terminal methionine from nascent proteins. The N-terminal methionine is often cleaved when the second residue in the primary sequence is small and uncharged (Met-Ala-, Cys, Gly, Pro, Ser, Thr, or Val). This is Methionine aminopeptidase 1D, mitochondrial (metap1d) from Dictyostelium discoideum (Social amoeba).